The following is a 388-amino-acid chain: Protein SopA (388 aa).

This sequence belongs to the ParA family.

This protein is essential for plasmid partition. It ensures the proper distribution of newly replicated plasmids to daughter cells during cell division. SopA is trans-acting. The chain is Protein SopA (sopA) from Escherichia coli O157:H7.